A 450-amino-acid polypeptide reads, in one-letter code: Phosphoglucosamine mutase (450 aa).

Serine 101 serves as the catalytic Phosphoserine intermediate. The Mg(2+) site is built by serine 101, aspartate 240, aspartate 242, and aspartate 244. A Phosphoserine modification is found at serine 101.

Belongs to the phosphohexose mutase family. Requires Mg(2+) as cofactor. Post-translationally, activated by phosphorylation.

The catalysed reaction is alpha-D-glucosamine 1-phosphate = D-glucosamine 6-phosphate. Functionally, catalyzes the conversion of glucosamine-6-phosphate to glucosamine-1-phosphate. The protein is Phosphoglucosamine mutase of Streptococcus pneumoniae (strain Hungary19A-6).